A 32-amino-acid chain; its full sequence is uncharacterized protein (32 aa).

This is an uncharacterized protein from Gallus gallus (Chicken).